Consider the following 469-residue polypeptide: Maintenance of mitochondrial morphology protein 1 (469 aa).

Topologically, residues 1–25 (MADEVPTAVPLATPAGSSSLSFTQG) are lumenal. Residues 26–46 (FLLGQLSIAILIFCFIKFFIF) traverse the membrane as a helical segment. Residues 47–469 (GEPPSADDRA…GMRWRGALPR (423 aa)) lie on the Cytoplasmic side of the membrane. The SMP-LTD domain maps to 124–363 (QPESLDWFNV…EPRFQQIVLP (240 aa)). Low complexity predominate over residues 266 to 299 (SSSPPSTTAPMPSPTSNTHRSSSPSRPASSSGAP). Disordered stretches follow at residues 266 to 304 (SSSP…HRPT) and 426 to 469 (EAEG…ALPR). 2 stretches are compositionally biased toward basic and acidic residues: residues 426–439 (EAEG…EIRA) and 449–462 (ERSR…DGMR).

This sequence belongs to the MMM1 family. As to quaternary structure, homodimer. Component of the ER-mitochondria encounter structure (ERMES) or MDM complex, composed of mmm1, MDM10, MDM12 and MDM34. A mmm1 homodimer associates with one molecule of MDM12 on each side in a pairwise head-to-tail manner, and the SMP-LTD domains of mmm1 and MDM12 generate a continuous hydrophobic tunnel for phospholipid trafficking.

The protein resides in the endoplasmic reticulum membrane. In terms of biological role, component of the ERMES/MDM complex, which serves as a molecular tether to connect the endoplasmic reticulum (ER) and mitochondria. Components of this complex are involved in the control of mitochondrial shape and protein biogenesis, and function in nonvesicular lipid trafficking between the ER and mitochondria. The MDM12-mmm1 subcomplex functions in the major beta-barrel assembly pathway that is responsible for biogenesis of all outer membrane beta-barrel proteins, and acts in a late step after the SAM complex. The MDM10-MDM12-mmm1 subcomplex further acts in the TOM40-specific pathway after the action of the MDM12-mmm1 complex. Essential for establishing and maintaining the structure of mitochondria and maintenance of mtDNA nucleoids. The protein is Maintenance of mitochondrial morphology protein 1 of Pyrenophora tritici-repentis (strain Pt-1C-BFP) (Wheat tan spot fungus).